The chain runs to 292 residues: Tissue factor (292 aa).

Positions methionine 1–threonine 35 are cleaved as a signal peptide. At threonine 36–glutamate 248 the chain is on the extracellular side. N-linked (GlcNAc...) asparagine glycosylation is present at asparagine 43. The WKS motif motif lies at tryptophan 46–serine 48. A disulfide bond links cysteine 81 and cysteine 89. 2 N-linked (GlcNAc...) asparagine glycosylation sites follow: asparagine 153 and asparagine 181. The cysteines at positions 215 and 238 are disulfide-linked. A helical transmembrane segment spans residues leucine 249 to leucine 271. At histidine 272–alanine 292 the chain is on the cytoplasmic side. A lipid anchor (S-palmitoyl cysteine) is attached at cysteine 274.

It belongs to the tissue factor family. As to quaternary structure, interacts with HSPE; the interaction, inhibited by heparin, promotes the generation of activated factor X and activates coagulation in the presence of activated factor VII.

Its subcellular location is the membrane. Functionally, initiates blood coagulation by forming a complex with circulating factor VII or VIIa. The [TF:VIIa] complex activates factors IX or X by specific limited proteolysis. TF plays a role in normal hemostasis by initiating the cell-surface assembly and propagation of the coagulation protease cascade. This chain is Tissue factor (F3), found in Bos taurus (Bovine).